The primary structure comprises 476 residues: Glutamate mutase epsilon subunit (476 aa).

R62 is a binding site for L-glutamate. G64 is an adenosylcob(III)alamin binding site. R96 lines the L-glutamate pocket. N119 provides a ligand contact to adenosylcob(III)alamin. L-glutamate-binding positions include 145–146, E167, and Y173; that span reads RH. P176 contributes to the adenosylcob(III)alamin binding site. Residue Y177 coordinates L-glutamate. Residues F289, K318, and E322 each coordinate adenosylcob(III)alamin.

It belongs to the methylaspartate mutase GlmE subunit family. In terms of assembly, heterotetramer composed of 2 epsilon subunits (GlmE) and 2 sigma subunits (GlmS). GlmE exists as a homodimer and GlmS as a monomer. It depends on adenosylcob(III)alamin as a cofactor.

The catalysed reaction is (2S,3S)-3-methyl-L-aspartate = L-glutamate. Its pathway is amino-acid degradation; L-glutamate degradation via mesaconate pathway; acetate and pyruvate from L-glutamate: step 1/4. Catalyzes the carbon skeleton rearrangement of L-glutamate to L-threo-3-methylaspartate ((2S,3S)-3-methylaspartate). The protein is Glutamate mutase epsilon subunit of Halobacterium salinarum (strain ATCC 700922 / JCM 11081 / NRC-1) (Halobacterium halobium).